We begin with the raw amino-acid sequence, 364 residues long: tRNA 2-selenouridine synthase (364 aa).

One can recognise a Rhodanese domain in the interval 14–137 (LLADTPLIDV…LRQTAIQATW (124 aa)). The active-site S-selanylcysteine intermediate is the Cys97.

This sequence belongs to the SelU family. Monomer.

The catalysed reaction is 5-methylaminomethyl-2-thiouridine(34) in tRNA + selenophosphate + (2E)-geranyl diphosphate + H2O + H(+) = 5-methylaminomethyl-2-selenouridine(34) in tRNA + (2E)-thiogeraniol + phosphate + diphosphate. The enzyme catalyses 5-methylaminomethyl-2-thiouridine(34) in tRNA + (2E)-geranyl diphosphate = 5-methylaminomethyl-S-(2E)-geranyl-thiouridine(34) in tRNA + diphosphate. It carries out the reaction 5-methylaminomethyl-S-(2E)-geranyl-thiouridine(34) in tRNA + selenophosphate + H(+) = 5-methylaminomethyl-2-(Se-phospho)selenouridine(34) in tRNA + (2E)-thiogeraniol. It catalyses the reaction 5-methylaminomethyl-2-(Se-phospho)selenouridine(34) in tRNA + H2O = 5-methylaminomethyl-2-selenouridine(34) in tRNA + phosphate. Functionally, involved in the post-transcriptional modification of the uridine at the wobble position (U34) of tRNA(Lys), tRNA(Glu) and tRNA(Gln). Catalyzes the conversion of 2-thiouridine (S2U-RNA) to 2-selenouridine (Se2U-RNA). Acts in a two-step process involving geranylation of 2-thiouridine (S2U) to S-geranyl-2-thiouridine (geS2U) and subsequent selenation of the latter derivative to 2-selenouridine (Se2U) in the tRNA chain. The protein is tRNA 2-selenouridine synthase of Salmonella enteritidis PT4 (strain P125109).